The chain runs to 434 residues: ATP-dependent protease ATPase subunit HslU (434 aa).

Residues Ile-18, 60 to 65, Asp-247, Glu-312, and Arg-384 each bind ATP; that span reads GVGKTE.

The protein belongs to the ClpX chaperone family. HslU subfamily. A double ring-shaped homohexamer of HslV is capped on each side by a ring-shaped HslU homohexamer. The assembly of the HslU/HslV complex is dependent on binding of ATP.

It is found in the cytoplasm. Its function is as follows. ATPase subunit of a proteasome-like degradation complex; this subunit has chaperone activity. The binding of ATP and its subsequent hydrolysis by HslU are essential for unfolding of protein substrates subsequently hydrolyzed by HslV. HslU recognizes the N-terminal part of its protein substrates and unfolds these before they are guided to HslV for hydrolysis. The sequence is that of ATP-dependent protease ATPase subunit HslU from Brucella ovis (strain ATCC 25840 / 63/290 / NCTC 10512).